A 604-amino-acid chain; its full sequence is Arginine--tRNA ligase (604 aa).

The 'HIGH' region motif lies at 142–152; that stretch reads PNIAKEMHVGH.

Belongs to the class-I aminoacyl-tRNA synthetase family. As to quaternary structure, monomer.

It localises to the cytoplasm. The enzyme catalyses tRNA(Arg) + L-arginine + ATP = L-arginyl-tRNA(Arg) + AMP + diphosphate. This chain is Arginine--tRNA ligase, found in Prochlorococcus marinus (strain MIT 9312).